Here is an 85-residue protein sequence, read N- to C-terminus: Large ribosomal subunit protein bL27 (85 aa).

Positions 1–23 (MAHKKAGGSSRNGRDSESKRLGV) are disordered.

Belongs to the bacterial ribosomal protein bL27 family.

This is Large ribosomal subunit protein bL27 from Nitrosococcus oceani (strain ATCC 19707 / BCRC 17464 / JCM 30415 / NCIMB 11848 / C-107).